Here is a 215-residue protein sequence, read N- to C-terminus: Large ribosomal subunit protein uL1 (215 aa).

Belongs to the universal ribosomal protein uL1 family. In terms of assembly, part of the 50S ribosomal subunit.

Its function is as follows. Binds directly to 23S rRNA. Probably involved in E site tRNA release. Protein L1 is also a translational repressor protein, it controls the translation of its operon by binding to its mRNA. This chain is Large ribosomal subunit protein uL1, found in Methanospirillum hungatei JF-1 (strain ATCC 27890 / DSM 864 / NBRC 100397 / JF-1).